The sequence spans 268 residues: Zwei Ig domain protein zig-8 (268 aa).

An N-terminal signal peptide occupies residues 1 to 21 (MRRFSNICVILFSFLYATGHG). 2 consecutive Ig-like C2-type domains span residues 40–128 (PSQT…NTVY) and 140–251 (PSPS…NSAT). A disulfide bond links Cys-57 and Cys-118. N-linked (GlcNAc...) asparagine glycans are attached at residues Asn-82, Asn-155, Asn-164, and Asn-191. Cys-165 and Cys-226 are joined by a disulfide.

As to expression, expressed in PVT neurons and pharyngeal muscles.

Its subcellular location is the secreted. Functionally, together with zig-5, required postembryonically to maintain the position of ASI and ASH head neuron cell bodies and ventral nerve cord axons of PVQ, PVP and HSN neurons by preventing their displacement that could occur during body growth and movement. May act by reducing L1CAM-like protein sax-7 (long isoform) adhesion. The sequence is that of Zwei Ig domain protein zig-8 from Caenorhabditis elegans.